A 714-amino-acid polypeptide reads, in one-letter code: Fumarate reductase flavoprotein subunit (714 aa).

FAD contacts are provided by residues 13–16 (GGLA), 42–44 (SHS), and 49–50 (GG). H43 is subject to Tele-8alpha-FAD histidine. Residues H257 and R273 contribute to the active site. Residues E420 and 436 to 437 (SV) each bind FAD.

This sequence belongs to the FAD-dependent oxidoreductase 2 family. FRD/SDH subfamily. As to quaternary structure, part of an enzyme complex containing three subunits: a flavoprotein (frdA), an iron-sulfur protein (frdB), and diheme cytochrome b (frdC). FAD is required as a cofactor.

Its subcellular location is the cell inner membrane. The enzyme catalyses a quinone + succinate = fumarate + a quinol. In terms of biological role, the fumarate reductase enzyme complex is required for fumarate respiration. The protein is Fumarate reductase flavoprotein subunit (frdA) of Helicobacter pylori (strain J99 / ATCC 700824) (Campylobacter pylori J99).